We begin with the raw amino-acid sequence, 120 residues long: Large ribosomal subunit protein uL18 (120 aa).

This sequence belongs to the universal ribosomal protein uL18 family. Part of the 50S ribosomal subunit; part of the 5S rRNA/L5/L18/L25 subcomplex. Contacts the 5S and 23S rRNAs.

In terms of biological role, this is one of the proteins that bind and probably mediate the attachment of the 5S RNA into the large ribosomal subunit, where it forms part of the central protuberance. In Rhodopseudomonas palustris (strain BisB5), this protein is Large ribosomal subunit protein uL18.